A 274-amino-acid polypeptide reads, in one-letter code: MASDSGNQGTLCTLEFAVQMTCQSCVDAVRKSLQGVAGVQDVEVHLEDQMVLVHTTLPSQEVQALLEGTGRQAVLKGMGSGQLQNLGAAVAILGGPGTVQGVVRFLQLTPERCLIEGTIDGLEPGLHGLHVHQYGDLTNNCNSCGNHFNPDGASHGGPQDSDRHRGDLGNVRADADGRAIFRMEDEQLKVWDVIGRSLIIDEGEDDLGRGGHPLSKITGNSGERLACGIIARSAGLFQNPKQICSCDGLTIWEERGRPIAGKGRKESAQPPAHL.

The HMA domain occupies 11–74; it reads LCTLEFAVQM…LLEGTGRQAV (64 aa). Cu cation contacts are provided by Cys22 and Cys25. Residue Lys76 forms a Glycyl lysine isopeptide (Lys-Gly) (interchain with G-Cter in ubiquitin) linkage. Residues 88–234 form a superoxide dismutase-like region; sequence AAVAILGGPG…LACGIIARSA (147 aa). Cysteines 141 and 227 form a disulfide. Positions 147, 155, 164, and 167 each coordinate Zn(2+). Residues Lys189, Lys216, and Lys241 each participate in a glycyl lysine isopeptide (Lys-Gly) (interchain with G-Cter in ubiquitin) cross-link. Cu cation-binding residues include Cys244 and Cys246. Residue Ser267 is modified to Phosphoserine.

In the C-terminal section; belongs to the Cu-Zn superoxide dismutase family. Homodimer, and heterodimer with SOD1. Interacts with COMMD1. Interacts with XIAP/BIRC4. Interacts with SLC31A1(via C-terminal domain); this interaction is Cu(1+)-mediated. The heterodimer CCS:SOD1 interacts with SLC31A1; this heterotrimer is Cu(1+)-mediated and its maintenance is regulated through SOD1 activation. It depends on Cu(2+) as a cofactor. Requires Zn(2+) as cofactor. Post-translationally, ubiquitinion by XIAP/BIRC4 leads to enhancement of its chaperone activity toward its physiologic target, SOD1, rather than proteasomal degradation. XIAP/BIRC4 preferentially ubiquitinates at Lys-241. In terms of tissue distribution, ubiquitous.

It localises to the cytoplasm. Its function is as follows. Delivers copper to copper zinc superoxide dismutase (SOD1). This chain is Copper chaperone for superoxide dismutase, found in Homo sapiens (Human).